A 278-amino-acid polypeptide reads, in one-letter code: Shikimate dehydrogenase (NADP(+)) (278 aa).

Shikimate-binding positions include 19–21 and threonine 66; that span reads SRS. Catalysis depends on lysine 70, which acts as the Proton acceptor. Aspartate 82 contacts NADP(+). The shikimate site is built by asparagine 91 and aspartate 107. Residues 133-137, 157-162, and isoleucine 222 each bind NADP(+); these read GAGGA and NRTRAK. Tyrosine 224 is a shikimate binding site. Glycine 245 provides a ligand contact to NADP(+).

The protein belongs to the shikimate dehydrogenase family. As to quaternary structure, homodimer.

The enzyme catalyses shikimate + NADP(+) = 3-dehydroshikimate + NADPH + H(+). Its pathway is metabolic intermediate biosynthesis; chorismate biosynthesis; chorismate from D-erythrose 4-phosphate and phosphoenolpyruvate: step 4/7. Functionally, involved in the biosynthesis of the chorismate, which leads to the biosynthesis of aromatic amino acids. Catalyzes the reversible NADPH linked reduction of 3-dehydroshikimate (DHSA) to yield shikimate (SA). The chain is Shikimate dehydrogenase (NADP(+)) from Dinoroseobacter shibae (strain DSM 16493 / NCIMB 14021 / DFL 12).